The chain runs to 271 residues: Centromere protein K (271 aa).

2 coiled-coil regions span residues 11 to 44 (DTITDVEAVIDTEEELIKECEEMWKDMEDCQNKL) and 102 to 151 (LRCD…VENQ).

Belongs to the CENP-K/MCM22 family. In terms of assembly, component of the CENPA-CAD complex, composed of CENPI, CENPK, CENPL, CENPO, CENPP, CENPQ, CENPR and CENPS. The CENPA-CAD complex interacts with the CENPA-NAC complex, at least composed of CENPA, CENPC, CENPH, CENPM, CENPN, CENPT and CENPU. May interact with Sox6. As to expression, highly expressed in testis.

The protein resides in the nucleus. It localises to the chromosome. The protein localises to the centromere. It is found in the kinetochore. Component of the CENPA-CAD (nucleosome distal) complex, a complex recruited to centromeres which is involved in assembly of kinetochore proteins, mitotic progression and chromosome segregation. May be involved in incorporation of newly synthesized CENPA into centromeres via its interaction with the CENPA-NAC complex. Acts in coordination with KNL1 to recruit the NDC80 complex to the outer kinetochore. The polypeptide is Centromere protein K (Cenpk) (Mus musculus (Mouse)).